An 849-amino-acid chain; its full sequence is Villin-1 (849 aa).

5 Gelsolin-like repeats span residues 30 to 107 (IEKS…DKFL), 147 to 213 (RVTE…EDGK), 262 to 335 (VPVE…TVEF), 405 to 475 (QEQL…PEMF), and 527 to 566 (AIQVDLAASSLNSSHCYILQAGGSFFTWLGSLSSPSDHNL). A disordered region spans residues 739–849 (ETPERSLRKS…AVATGTPRRL (111 aa)). 2 stretches are compositionally biased toward low complexity: residues 747–782 (KSSSSSLPRRSPGTSSSEPTTPEQRAAARTFASAST) and 791–823 (PAALSPSLSTPSPSPRSRSSASSSPASWNSTPS).

The protein belongs to the villin/gelsolin family.

It localises to the cytoplasm. The protein resides in the cytoskeleton. Ca(2+)-independent actin-binding protein. Binds actin microfilaments (MFs). Involved in actin filament bundling, severing and capping. Caps the barbed end of actin filaments and protects them from disassembly. Promotes VLN3-mediated MF severing. This is Villin-1 from Oryza sativa subsp. indica (Rice).